The primary structure comprises 116 residues: Evasin P1180 (116 aa).

A signal peptide spans 1–25; sequence MARNWSFRVIFVSAMWCALLKFATL. Intrachain disulfides connect cysteine 38–cysteine 58, cysteine 54–cysteine 95, cysteine 71–cysteine 100, and cysteine 90–cysteine 109. N-linked (GlcNAc...) asparagine glycans are attached at residues asparagine 45, asparagine 73, and asparagine 104.

It localises to the secreted. In terms of biological role, salivary chemokine-binding protein which binds to host chemokines CCL2, CCL3, CCL4, CCL8 and CCL18. This is Evasin P1180 from Amblyomma triste (Neotropical tick).